The sequence spans 170 residues: Peptide deformylase (170 aa).

2 residues coordinate Fe cation: Cys-91 and His-133. Glu-134 is a catalytic residue. Residue His-137 coordinates Fe cation.

Belongs to the polypeptide deformylase family. Fe(2+) serves as cofactor.

It catalyses the reaction N-terminal N-formyl-L-methionyl-[peptide] + H2O = N-terminal L-methionyl-[peptide] + formate. In terms of biological role, removes the formyl group from the N-terminal Met of newly synthesized proteins. Requires at least a dipeptide for an efficient rate of reaction. N-terminal L-methionine is a prerequisite for activity but the enzyme has broad specificity at other positions. This chain is Peptide deformylase, found in Aliivibrio fischeri (strain ATCC 700601 / ES114) (Vibrio fischeri).